The sequence spans 312 residues: Acetaldehyde dehydrogenase (312 aa).

An NAD(+)-binding site is contributed by 12 to 15 (SGNI). The active-site Acyl-thioester intermediate is the cysteine 132. NAD(+)-binding positions include 163 to 171 (SAGPGTRAN) and asparagine 290.

The protein belongs to the acetaldehyde dehydrogenase family. Heterotetramer composed of two DmpG (aldolase) and two DmpF (dehydrogenase) subunits, which allows a direct channeling of acetaldehyde between the two active sites.

The catalysed reaction is acetaldehyde + NAD(+) + CoA = acetyl-CoA + NADH + H(+). It participates in aromatic compound metabolism; phenol degradation. Is not activated by Mn(2+), Mg(2+), Ca(2+), Zn(2+) or Co(2+). Functionally, catalyzes the conversion of acetaldehyde to acetyl-CoA, using NAD(+) and coenzyme A. Can also act on propanal and butanal to form propanoyl-CoA and butanoyl-CoA, respectively. Is the final enzyme in the meta-cleavage pathway for the degradation of aromatic compounds such as phenols, cresols and catechols. NADP(+) can replace NAD(+) but the rate of reaction is much slower. The protein is Acetaldehyde dehydrogenase (dmpF) of Pseudomonas sp. (strain CF600).